The primary structure comprises 320 residues: Mitochondrial thiamine pyrophosphate carrier (320 aa).

Solcar repeat units lie at residues 13–106 (NTKL…LTEL), 116–202 (REFS…LKHL), and 214–309 (NENL…FCNV). Residues 19 to 39 (AVAGSVSGLVTRALISPFDVI) form a helical membrane-spanning segment. Ser-51 is modified (phosphoserine). Transmembrane regions (helical) follow at residues 87-107 (ILSI…TELV), 122-142 (FVCG…VDVL), 173-193 (VFYK…GLQF), and 220-240 (LLCG…LDLF). The Substrate recognition motif lies at 241–246 (KKRLQV). A helical membrane pass occupies residues 293-313 (ALSTGFMFFWYEFFCNVFHCM).

It belongs to the mitochondrial carrier (TC 2.A.29) family.

Its subcellular location is the mitochondrion membrane. It catalyses the reaction thiamine phosphate(out) + thiamine diphosphate(in) = thiamine phosphate(in) + thiamine diphosphate(out). Mitochondrial transporter mediating uptake of thiamine diphosphate into mitochondria. It is not clear if the antiporter activity is affected by the membrane potential or by the proton electrochemical gradient. This is Mitochondrial thiamine pyrophosphate carrier (SLC25A19) from Macaca fascicularis (Crab-eating macaque).